Reading from the N-terminus, the 210-residue chain is Claudin-4 (210 aa).

Residues 1–7 (MASMGLQ) are Cytoplasmic-facing. Residues 1-103 (MASMGLQVLG…GMLLSVVGGK (103 aa)) form an interaction with EPHA2 region. A helical membrane pass occupies residues 8–28 (VLGISLAVLGWLGIILSCALP). The Extracellular portion of the chain corresponds to 29–81 (MWRVTAFIGSNIVTAQTSWEGLWMNCVVQSTGQMQCKMYDSMLALPQDLQAAR). Residues Cys54 and Cys64 are joined by a disulfide bond. Residues 82–102 (ALMVISIIVGALGMLLSVVGG) traverse the membrane as a helical segment. Topologically, residues 103 to 116 (KCTNCMEDETVKAK) are cytoplasmic. Residues 117-137 (IMITAGAVFIVASMLIMVPVS) form a helical membrane-spanning segment. The Extracellular portion of the chain corresponds to 138-160 (WTAHNVIRDFYNPMVASGQKREM). The chain crosses the membrane as a helical span at residues 161 to 181 (GASLYVGWAASGLLLLGGGLL). At 182 to 210 (CCSCPPRSNDKPYSAKYSAARSVPASNYV) the chain is on the cytoplasmic side. Position 209 is a phosphotyrosine; by EPHA2 (Tyr209). The interactions with TJP1, TJP2 and TJP3 stretch occupies residues 209–210 (YV).

This sequence belongs to the claudin family. In terms of assembly, can form heteropolymeric strands with other claudins. Interacts with CLDN8. Interacts with CLDN1. Directly interacts with TJP1/ZO-1, TJP2/ZO-2 and TJP3/ZO-3. Interacts with EPHA2; phosphorylates CLDN4 and may regulate tight junctions. Phosphorylated. Phosphorylation by EPHA2 is stimulated by EFNA1 and alters interaction with TJP1. In terms of tissue distribution, expressed primarily in lung and kidney. Present in both cortical and medullar collecting ducts (at protein level).

The protein localises to the cell junction. It localises to the tight junction. Its subcellular location is the cell membrane. The enzyme catalyses chloride(in) = chloride(out). It catalyses the reaction bromide(in) = bromide(out). The catalysed reaction is iodide(out) = iodide(in). It carries out the reaction fluoride(in) = fluoride(out). In terms of biological role, can associate with other claudins to regulate tight junction structural and functional strand dynamics. May coassemble with CLDN8 into tight junction strands containing anion-selective channels that convey paracellular chloride permeability in renal collecting ducts. May integrate into CLDN3 strands to modulate localized tight junction barrier properties. May disrupt strand assembly of channel-forming CLDN2 and CLDN15 and inhibit cation conductance. Cannot form tight junction strands on its own. The chain is Claudin-4 from Mus musculus (Mouse).